The chain runs to 5005 residues: Bridge-like lipid transfer protein family member 1 (5005 aa).

Residues 26–46 (NVVWLLVATILSCGWIIYLTY) form a helical membrane-spanning segment. Disordered regions lie at residues 691-721 (LRPSQKTSDRVVSSPSTSSRPPIDPSELPPD), 1218-1257 (LSLQVPLRSHSSSSSSEENSSSSAAQPLLAGEKESPSSVA), and 1269-1310 (GTKR…LKRQ). Low complexity-rich tracts occupy residues 700–711 (RVVSSPSTSSRP) and 1226–1240 (SHSSSSSSEENSSSS). Basic and acidic residues predominate over residues 1248-1257 (GEKESPSSVA). The span at 1278-1303 (SIPTEISGNSPVSPNTQDKSVGQSPL) shows a compositional bias: polar residues. Residues S1301, S1305, and S1323 each carry the phosphoserine modification. A Phosphothreonine modification is found at T1325. Disordered stretches follow at residues 1343 to 1376 (SDVSRSDENVLDSPKQRRSFGSFPYTPSADSNSF), 1400 to 1427 (EFEPISSDEGPGTYPGRKKKKKQTQQID), 1521 to 1548 (TNKRTSKSSLHRPLDLDTPTSEESSSSF), and 1676 to 1704 (FSENLSSKQDIRGTKTEQSTIGTTNQGQA). Phosphoserine is present on residues S1355 and S1406. Over residues 1521-1530 (TNKRTSKSSL) the composition is skewed to basic residues. The segment covering 1691 to 1704 (TEQSTIGTTNQGQA) has biased composition (polar residues). S1805 and S1808 each carry phosphoserine. Disordered stretches follow at residues 1924-1991 (DTER…PLMP), 2401-2420 (SDQNTLDGTHSQHSTSQDDV), and 2598-2677 (TAGS…KDVV). Polar residues-rich tracts occupy residues 1931–1948 (LTSNNSSDSPTGSGYNTD), 1959–1971 (TSPSSDLNGNSVS), 2401–2418 (SDQNTLDGTHSQHSTSQD), and 2598–2608 (TAGSASPTPTF). A phosphoserine mark is found at S2601 and S2603. Positions 2619 to 2638 (SDFSRSSRGSLNGGNRVNNA) are enriched in low complexity. Positions 2643–2665 (TNNENNKKESRNKNSLGRSERRT) are enriched in basic and acidic residues. S2755 is subject to Phosphoserine. Positions 2928–2967 (RQPSTAPQPVKEDIATPLPSEKTPTSVNQTPVETNEFPQL) are disordered. A compositionally biased stretch (polar residues) spans 2949–2964 (KTPTSVNQTPVETNEF). The residue at position 3562 (S3562) is a Phosphoserine. Positions 3612 to 3622 (PSYSRSKSISA) are enriched in polar residues. Disordered stretches follow at residues 3612 to 3661 (PSYS…VTFN), 3686 to 3744 (SSNS…ERFY), 3821 to 3843 (RRSYDRSSRSLDQDSPSKKKKFQ), 3914 to 3954 (YGMK…KGKG), 4088 to 4146 (GTTY…SSSS), and 4325 to 4394 (QSAS…KAAS). Position 3653 is a phosphoserine (S3653). Residues 3686 to 3700 (SSNSEGSCSVFSSPK) are compositionally biased toward polar residues. Residues 3727 to 3736 (EDSEKDEKDE) show a composition bias toward acidic residues. Basic and acidic residues predominate over residues 3821 to 3837 (RRSYDRSSRSLDQDSPS). 2 stretches are compositionally biased toward polar residues: residues 3931–3940 (TVQSKTNTLL) and 4098–4113 (PGGNATQSGTKTSASK). Residues 4122-4146 (LGSPLGRSRHSSSQSDLTSSSSSSS) are compositionally biased toward low complexity. S4124 is modified (phosphoserine). Residues 4325-4358 (QSASFTHMPQSPNVFNEHMTNSTMSPGTVGQSLK) show a composition bias toward polar residues. Residues 4359 to 4372 (SPASIRSRSVSDSS) are compositionally biased toward low complexity. The span at 4381-4394 (KTSTPFNKSNKAAS) shows a compositional bias: polar residues.

Highly expressed in testis and ovary. Weakly or not expressed in other tissues.

It is found in the cell membrane. It localises to the endoplasmic reticulum membrane. Its subcellular location is the mitochondrion membrane. Tube-forming lipid transport protein which provides phosphatidylethanolamine for glycosylphosphatidylinositol (GPI) anchor synthesis in the endoplasmic reticulum. Plays a role in endosomal trafficking and endosome recycling. Also involved in the actin cytoskeleton and cilia structural dynamics. Acts as a regulator of phagocytosis. The protein is Bridge-like lipid transfer protein family member 1 of Homo sapiens (Human).